The sequence spans 115 residues: U3-lycotoxin-Ls1h (115 aa).

The N-terminal stretch at 1 to 20 (MKFVLLFGVFLVTLFSYSSA) is a signal peptide. Positions 21–44 (EMLDDFDQADEDELLSLIEKEEAR) are excised as a propeptide. 4 cysteine pairs are disulfide-bonded: Cys-48-Cys-63, Cys-55-Cys-72, Cys-62-Cys-87, and Cys-74-Cys-85.

Belongs to the neurotoxin 19 (CSTX) family. 01 subfamily. As to expression, expressed by the venom gland.

It is found in the secreted. In Lycosa singoriensis (Wolf spider), this protein is U3-lycotoxin-Ls1h.